An 87-amino-acid polypeptide reads, in one-letter code: MKPGIHPEYRPVLFHDTSADVYFLIGSTAETDKTHTHTDGKTYPYVTLDVSSASHPVYTGEQRKTKSEGRVAGFNKRFAGFVGGKGA.

It belongs to the bacterial ribosomal protein bL31 family. Type B subfamily. In terms of assembly, part of the 50S ribosomal subunit.

This chain is Large ribosomal subunit protein bL31B, found in Pseudomonas aeruginosa (strain LESB58).